The primary structure comprises 211 residues: Claudin-7 (211 aa).

Residues 1–7 (MANSGLQ) lie on the Cytoplasmic side of the membrane. The chain crosses the membrane as a helical span at residues 8–28 (LLGFSMAMLGWVGLIASTAIP). Topologically, residues 29–81 (QWQMSSYAGDNIITAQAMYKGLWMECVTQSTGMMSCKMYDSVLALPGALQATR) are extracellular. Residues 82–102 (ALMVVSLVLGFLAMFVATMGM) form a helical membrane-spanning segment. Residues 103–119 (KCTRCGGDDKAKKARIA) lie on the Cytoplasmic side of the membrane. A helical transmembrane segment spans residues 120 to 140 (MTGGIVFIVAGLAALVACSWI). The Extracellular portion of the chain corresponds to 141–160 (GHQIVTDFYNPLTPMNVKYE). Residues 161–181 (FGPAIFIGWAGSALVLLGGAL) form a helical membrane-spanning segment. Residues 182-211 (LSCSCPGSESKAAYRAPRSYPKSNSSKEYV) lie on the Cytoplasmic side of the membrane. An interactions with TJP1, TJP2 and TJP3 region spans residues 210–211 (YV).

Belongs to the claudin family. Directly interacts with TJP1/ZO-1, TJP2/ZO-2 and TJP3/ZO-3. The phosphorylated form interacts with EPCAM. Post-translationally, phosphorylated. In terms of tissue distribution, expressed predominantly in lung and kidney.

The protein resides in the cell membrane. Its subcellular location is the basolateral cell membrane. It is found in the cell junction. The protein localises to the tight junction. Functionally, plays a major role in tight junction-specific obliteration of the intercellular space, through calcium-independent cell-adhesion activity. This Mus musculus (Mouse) protein is Claudin-7 (Cldn7).